The primary structure comprises 70 residues: Sporulation protein YhaL (70 aa).

A helical transmembrane segment spans residues 3-23 (FFPWWVYLCIVGIIFSAYKLV). The tract at residues 48–70 (MEKERERRSSQQHEEENQNHSIA) is disordered.

It localises to the cell membrane. Functionally, required for efficient sporulation. This Bacillus subtilis (strain 168) protein is Sporulation protein YhaL (yhaL).